A 261-amino-acid polypeptide reads, in one-letter code: Small ribosomal subunit protein uS2 (261 aa).

It belongs to the universal ribosomal protein uS2 family.

This chain is Small ribosomal subunit protein uS2, found in Thermodesulfovibrio yellowstonii (strain ATCC 51303 / DSM 11347 / YP87).